Here is a 233-residue protein sequence, read N- to C-terminus: Putative glutathione peroxidase 7, chloroplastic (233 aa).

Residues 1 to 69 (MAFSYASFST…KSKNFSVYAR (69 aa)) constitute a chloroplast transit peptide. Cys108 is an active-site residue.

Belongs to the glutathione peroxidase family.

It localises to the plastid. It is found in the chloroplast. It carries out the reaction 2 glutathione + H2O2 = glutathione disulfide + 2 H2O. Functionally, may constitute a glutathione peroxidase-like protective system against oxidative stresses. The polypeptide is Putative glutathione peroxidase 7, chloroplastic (GPX7) (Arabidopsis thaliana (Mouse-ear cress)).